The following is a 142-amino-acid chain: Prefoldin subunit alpha 1 (142 aa).

Belongs to the prefoldin subunit alpha family. In terms of assembly, heterohexamer of two alpha and four beta subunits.

Its subcellular location is the cytoplasm. Molecular chaperone capable of stabilizing a range of proteins. Seems to fulfill an ATP-independent, HSP70-like function in archaeal de novo protein folding. The polypeptide is Prefoldin subunit alpha 1 (pfdA1) (Methanocaldococcus jannaschii (strain ATCC 43067 / DSM 2661 / JAL-1 / JCM 10045 / NBRC 100440) (Methanococcus jannaschii)).